A 289-amino-acid polypeptide reads, in one-letter code: NAD kinase (289 aa).

Residue D68 is the Proton acceptor of the active site. NAD(+) contacts are provided by residues 68–69 (DG), K73, 142–143 (ND), R153, D172, 183–188 (TAYSLS), and Q243.

The protein belongs to the NAD kinase family. A divalent metal cation serves as cofactor.

The protein localises to the cytoplasm. The catalysed reaction is NAD(+) + ATP = ADP + NADP(+) + H(+). Functionally, involved in the regulation of the intracellular balance of NAD and NADP, and is a key enzyme in the biosynthesis of NADP. Catalyzes specifically the phosphorylation on 2'-hydroxyl of the adenosine moiety of NAD to yield NADP. In Acetivibrio thermocellus (strain ATCC 27405 / DSM 1237 / JCM 9322 / NBRC 103400 / NCIMB 10682 / NRRL B-4536 / VPI 7372) (Clostridium thermocellum), this protein is NAD kinase.